A 328-amino-acid chain; its full sequence is Sterol demethylase protein B (328 aa).

This sequence belongs to the NAD(P)-dependent epimerase/dehydratase family.

The catalysed reaction is a 3beta-hydroxy-4alpha-methylsteroid-4beta-carboxylate + NAD(+) = a 4alpha-methyl-3-oxosteroid + CO2 + NADH. It catalyses the reaction a 3beta-hydroxy-4alpha-methylsteroid-4beta-carboxylate + NADP(+) = a 4alpha-methyl-3-oxosteroid + CO2 + NADPH. It carries out the reaction 4beta-carboxy-4alpha-methyl-5alpha-cholesta-8,24-dien-3beta-ol + NAD(+) = 3-dehydro-4alpha-methylzymosterol + CO2 + NADH. The enzyme catalyses 4beta-carboxy-4alpha-methyl-5alpha-cholesta-8,24-dien-3beta-ol + NADP(+) = 3-dehydro-4alpha-methylzymosterol + CO2 + NADPH. The catalysed reaction is 3-dehydro-4alpha-methylzymosterol + NADPH + H(+) = 4alpha-methylzymosterol + NADP(+). Its pathway is steroid biosynthesis; sterol biosynthesis. Its function is as follows. Participates in the biosynthesis of bacterial sterols. Together with SdmA, removes one methyl group from the C-4 position of 4,4-dimethylated steroid molecules. SdmB catalyzes an oxidative decarboxylation that results in reduction of the 3beta-hydroxy group at the C-3 carbon to an oxo group. It also functions as a ketoreductase that converts the C-3 oxo group back to a hydroxyl group after C-4 demethylation. The chain is Sterol demethylase protein B from Methylococcus capsulatus (strain ATCC 33009 / NCIMB 11132 / Bath).